The primary structure comprises 471 residues: Nuclear receptor subfamily 0 group B member 1 (471 aa).

A run of 3 repeats spans residues 1–67 (MAGE…YRCC), 68–134 (FCGE…YRCC), and 135–201 (FCGE…YRCC). Residues 1–253 (MAGEDHQWQG…QRVALKSPQV (253 aa)) are 4 X 67 AA tandem repeats. 3 consecutive short sequence motifs (LXXLL motif) follow at residues 13-17 (LYNML), 80-84 (LYNML), and 147-151 (LYSLL). A 4; truncated repeat occupies 202-253 (FCGEDHPRQSGILCNMPMSAKQTHVAPEAQPGAPWWDPSCAAQRVALKSPQV). An NR LBD domain is found at 210–470 (QSGILCNMPM…DMMLEMLCAK (261 aa)). The AF-2 motif signature appears at 462–467 (MMLEML).

It belongs to the nuclear hormone receptor family. NR0 subfamily. As to quaternary structure, homodimer. Interacts with NR5A1, NR5A2, NR0B2 and with COPS2. Interacts with ESRRB; represses ESRRB activity at the GATA6 promoter.

The protein resides in the nucleus. Its subcellular location is the cytoplasm. In terms of biological role, nuclear receptor that lacks a DNA-binding domain and acts as a corepressor that inhibits the transcriptional activity of other nuclear receptors through heterodimeric interactions. Component of a cascade required for the development of the hypothalamic-pituitary-adrenal-gonadal axis. May also have a role in the development of the embryo and in the maintenance of embryonic stem cell pluripotency. The chain is Nuclear receptor subfamily 0 group B member 1 (NR0B1) from Sus scrofa (Pig).